We begin with the raw amino-acid sequence, 364 residues long: Melatonin receptor type 1B (364 aa).

Residues methionine 1–alanine 28 form the signal peptide. Topologically, residues glutamate 29 to threonine 45 are extracellular. The chain crosses the membrane as a helical span at residues valine 46–leucine 66. Residues arginine 67–asparagine 81 lie on the Cytoplasmic side of the membrane. A helical membrane pass occupies residues leucine 82 to leucine 102. The Extracellular segment spans residues histidine 103–alanine 115. The cysteines at positions 113 and 190 are disulfide-linked. The helical transmembrane segment at serine 116–isoleucine 136 threads the bilayer. Residues asparagine 137 to proline 158 are Cytoplasmic-facing. A helical membrane pass occupies residues leucine 159–glycine 179. Over serine 180–tyrosine 200 the chain is Extracellular. Residues threonine 201 to leucine 221 form a helical membrane-spanning segment. The Cytoplasmic segment spans residues arginine 222–alanine 255. A helical membrane pass occupies residues valine 256–isoleucine 276. Residues asparagine 277 to glutamate 287 lie on the Extracellular side of the membrane. A helical membrane pass occupies residues glycine 288–tyrosine 308. Residues glycine 309–leucine 364 are Cytoplasmic-facing.

Belongs to the G-protein coupled receptor 1 family. Expressed in the hippocampus, kidney, and ovary.

It is found in the cell membrane. Its function is as follows. High affinity receptor for melatonin. The activity of this receptor is mediated by pertussis toxin sensitive G proteins that inhibits adenylate cyclase activity. The chain is Melatonin receptor type 1B from Rattus norvegicus (Rat).